The following is a 989-amino-acid chain: Voltage-gated delayed rectifier potassium channel KCNH1 (989 aa).

Residues 1–220 lie on the Cytoplasmic side of the membrane; the sequence is MTMAGGRRGL…LHYCVFKTTW (220 aa). The 81-residue stretch at 14–94 folds into the PAS domain; sequence QNTFLENIVR…QTFENYEMNS (81 aa). The PAC domain maps to 93-145; it reads NSFEILMYKKNRTPVWFFVKIAPIRNEQDKVVLFLCTFSDITAFKQPIEDDSC. Residues 151-162 are required for phosphatidylinositol bisphosphate binding; that stretch reads FARLTRALTSSR. The chain crosses the membrane as a helical span at residues 221–241; it reads DWIILILTFYTAILVPYNVSF. Over 242–248 the chain is Extracellular; the sequence is KTRQNNV. A helical membrane pass occupies residues 249–269; it reads AWLVVDSIVDVIFLVDIVLNF. The Cytoplasmic portion of the chain corresponds to 270 to 290; the sequence is HTTFVGPAGEVISDPKLIRMN. Residues 291–309 traverse the membrane as a helical segment; the sequence is YLKTWFVIDLLSCLPYDVI. At 310 to 345 the chain is on the extracellular side; it reads NAFENVDEVSAFMGDPGKIGFADQIPPPLEGRESQG. Residues 346-368 traverse the membrane as a helical; Voltage-sensor segment; that stretch reads ISSLFSSLKVVRLLRLGRVARKL. At 369-377 the chain is on the cytoplasmic side; sequence DHYIEYGAA. Residues 378-399 form a helical membrane-spanning segment; sequence VLVLLVCVFGLAAHWMACIWYS. Over 400 to 448 the chain is Extracellular; sequence IGDYEIFDEDTKTIRNNSWLYQLAMDIGTPYQFNGSGSGKWEGGPSKNS. 2 N-linked (GlcNAc...) asparagine glycosylation sites follow: asparagine 415 and asparagine 433. The segment at residues 449 to 470 is an intramembrane region (pore-forming); that stretch reads VYISSLYFTMTSLTSVGFGNIA. The Selectivity filter signature appears at 463-468; it reads SVGFGN. Over 471 to 477 the chain is Extracellular; the sequence is PSTDIEK. A helical transmembrane segment spans residues 478–498; sequence IFAVAIMMIGSLLYATIFGNV. The Cytoplasmic segment spans residues 499–989; that stretch reads TTIFQQMYAN…ESERDIFGAS (491 aa). The tract at residues 673–770 is calmodulin-binding; that stretch reads KRDALQKVLE…LDDLDVEKGN (98 aa). An interaction with cyclic nucleotide-binding pocket region spans residues 699 to 701; the sequence is YNL. Positions 855–879 are enriched in basic and acidic residues; sequence KAESMETLPERTKASGEATLKKTDS. Disordered stretches follow at residues 855-886 and 962-989; these read KAES…GITK and RSSQ…FGAS. Residues 924-964 form a CAD (involved in subunit assembly) region; that stretch reads ATVLEVRHELKEDIKALNAKMTNIEKQLSEILRILTSRRSS. Residues serine 974, serine 978, and serine 981 each carry the phosphoserine modification. The segment covering 980-989 has biased composition (basic and acidic residues); it reads ESERDIFGAS.

The protein belongs to the potassium channel family. H (Eag) (TC 1.A.1.20) subfamily. Kv10.1/KCNH1 sub-subfamily. Homomultimer. The potassium channel is composed of a homo- or heterotetrameric complex of pore-forming alpha subunits that can associate with modulating beta subunits. Heteromultimer with KCNH5/EAG2. Interacts with ALG10B. Interacts with RABEP1. Interacts (via C-terminus) with CTTN. Interacts (via C-terminal cytoplasmic region) with Ca(2+)-bound calmodulin. Interacts with the spider kappa-theraphotoxin-Aa1a and mu/kappa-theraphotoxin-Ap1a. In terms of processing, channel activity is regulated via tyrosine phosphorylation/dephosphorylation by SRC and PTPN6. As to expression, highly expressed in brain and in myoblasts at the onset of fusion, but not in other tissues. Detected in HeLa (cervical carcinoma), SH-SY5Y (neuroblastoma) and MCF-7 (epithelial tumor) cells, but not in normal epithelial cells.

It is found in the cell membrane. It localises to the nucleus inner membrane. Its subcellular location is the cell projection. The protein resides in the dendrite. The protein localises to the axon. It is found in the presynaptic cell membrane. It localises to the perikaryon. Its subcellular location is the postsynaptic density membrane. The protein resides in the early endosome membrane. The catalysed reaction is K(+)(in) = K(+)(out). With respect to regulation, channel activity is inhibited by interaction with Ca(2+)-bound calmodulin. Interaction of a single pore-forming alpha subunit with a calmodulin chain is sufficient to promote channel closure. Channel activity is not regulated by cyclic nucleotides. Channel activity is inhibited by binding intracellular phosphatidylinositol-3,5-bisphosphate and phosphatidylinositol-4,5-bisphosphate (PIP2), but is not inhibited by phosphatidylinositol 4-phosphate. Inhibited by the spider kappa-theraphotoxin-Aa1a and mu/kappa-theraphotoxin-Ap1a. Its function is as follows. Pore-forming (alpha) subunit of a voltage-gated delayed rectifier potassium channel that mediates outward-rectifying potassium currents which, on depolarization, reaches a steady-state level and do not inactivate. The activation kinetics depend on the prepulse potential and external divalent cation concentration. With negative prepulses, the current activation is delayed and slowed down several fold, whereas more positive prepulses speed up activation. The time course of activation is biphasic with a fast and a slowly activating current component. Activates at more positive membrane potentials and exhibit a steeper activation curve. Channel properties are modulated by subunit assembly. Mediates IK(NI) current in myoblasts. Involved in the regulation of cell proliferation and differentiation, in particular adipogenic and osteogenic differentiation in bone marrow-derived mesenchymal stem cells (MSCs). This Homo sapiens (Human) protein is Voltage-gated delayed rectifier potassium channel KCNH1.